A 221-amino-acid chain; its full sequence is Endonuclease V (221 aa).

2 residues coordinate Mg(2+): Asp44 and Asp112.

It belongs to the endonuclease V family. Mg(2+) is required as a cofactor.

It is found in the cytoplasm. The catalysed reaction is Endonucleolytic cleavage at apurinic or apyrimidinic sites to products with a 5'-phosphate.. Functionally, DNA repair enzyme involved in the repair of deaminated bases. Selectively cleaves double-stranded DNA at the second phosphodiester bond 3' to a deoxyinosine leaving behind the intact lesion on the nicked DNA. The sequence is that of Endonuclease V from Trichormus variabilis (strain ATCC 29413 / PCC 7937) (Anabaena variabilis).